The sequence spans 401 residues: Argininosuccinate synthase (401 aa).

9 to 17 (AYSGGLDTS) is a binding site for ATP. Y86 contacts L-citrulline. Position 116 (G116) interacts with ATP. Positions 118, 122, and 123 each coordinate L-aspartate. Position 122 (N122) interacts with L-citrulline. Residues R126, S174, S183, E259, and Y271 each contribute to the L-citrulline site.

This sequence belongs to the argininosuccinate synthase family. Type 1 subfamily. Homotetramer.

The protein resides in the cytoplasm. The catalysed reaction is L-citrulline + L-aspartate + ATP = 2-(N(omega)-L-arginino)succinate + AMP + diphosphate + H(+). It participates in amino-acid biosynthesis; L-arginine biosynthesis; L-arginine from L-ornithine and carbamoyl phosphate: step 2/3. The chain is Argininosuccinate synthase from Bacillus cereus (strain AH187).